The following is a 296-amino-acid chain: Probable redox regulatory protein BQ2027_MB0506C (296 aa).

The protein belongs to the Rv0495c family.

Its function is as follows. Essential for maintaining intracellular redox homeostasis. This chain is Probable redox regulatory protein BQ2027_MB0506C, found in Mycobacterium bovis (strain ATCC BAA-935 / AF2122/97).